Reading from the N-terminus, the 460-residue chain is MAVMKFTWRSIIPRCSKGIEEAEAEAEAETKKQDSKQGSFSRLAMIDFSYPSSMFTEDLSTSLAGSNLYVFTLEELKVITQCFSSANFLGEGGFGPVHKGFIDDNLRPGLEAQPVAVKLLDLEGLQGHREWLTEVVFLAQLSHPHLVKLIGYCCEDENRLLVYEYMPRGSLENQLFAKYSVPLPWSTRMKIALGAAKGLAYLHEAEKPVIYRDFKASNILLDSDYSAKLSDFGLAKDGPEGDKTHVSTRVMGTRGYAAPEYIMTGHLTAMSDVYSFGVVLLELLTGRRSLDKSRSPREQNLAEWARPMLNESRRLARIMDPKLEGQYSETGARKAAALAYQCLSHRAKQRPKMSDVVNILEPLLDYGETSVASFVYTVPTHQKGGSPPKDDTDTKECEAKTELKKENGHHRNRHHHRRSHKSRDGHRHQNKSSSQSSVHSENDTSKQNLENGSNEECNID.

The 282-residue stretch at 83 to 364 (FSSANFLGEG…DVVNILEPLL (282 aa)) folds into the Protein kinase domain. ATP contacts are provided by residues 89–97 (LGEGGFGPV) and lysine 118. Phosphotyrosine is present on residues tyrosine 163 and tyrosine 165. The active-site Proton acceptor is the aspartate 213.

The protein belongs to the protein kinase superfamily. Ser/Thr protein kinase family. Interacts with the V.dahliae elicitor EPD1 (AC G2WWH6). In terms of processing, phosphorylated at Tyr-163 and Tyr-165 in the presence of pathogen-associated molecular patterns (PAMPs); this triggers the expression of pathogenesis-related genes. Mostly expressed in roots and, to a lesser extent, in leaves.

It is found in the cell membrane. It carries out the reaction L-seryl-[protein] + ATP = O-phospho-L-seryl-[protein] + ADP + H(+). The catalysed reaction is L-threonyl-[protein] + ATP = O-phospho-L-threonyl-[protein] + ADP + H(+). Its function is as follows. Required for pathogen-associated molecular pattern (PAMP, e.g. chitin and flg22)-triggered immunity (PTI) involving reactive oxygen species (ROS) accumulation and triggering plant defense, including defense-related gene expression (e.g. PR1 and LOX). Ensures specific recognition of the EPD1 effector of Verticillium dahliae, resulting in a hypersensitive response known as effector-triggered immunity (ETI), characterized by the activation of programmed cell death to limit infection by the pathogen. Priming plants with the incompatible pathogen V.dahliae leads to an increased resistance to compatible pathogens, as a result of systemic acquired resistance (SAR). This Gossypium barbadense (Sea Island cotton) protein is EPD1-interacting receptor-like cytoplasmic serine/threonine-protein kinase 5D.